Here is a 216-residue protein sequence, read N- to C-terminus: Cell envelope integrity protein Cei (216 aa).

A helical membrane pass occupies residues 25–45; the sequence is PAIVVVAFLVVVTCVMWTLAL.

Its subcellular location is the cell membrane. Contributes to cell envelope integrity and virulence. This is Cell envelope integrity protein Cei from Mycobacterium tuberculosis (strain ATCC 25618 / H37Rv).